We begin with the raw amino-acid sequence, 552 residues long: Terpene synthase 5 (552 aa).

Residues aspartate 307, aspartate 311, and glutamate 457 each coordinate Mg(2+). The DDXXD motif motif lies at 307–311 (DDTYD).

Belongs to the terpene synthase family. It depends on Mg(2+) as a cofactor.

Catalyzes the cyclization of farnesyl diphosphate to multiple sesquiterpenes, such as olefins and sesquiterpene alcohols. This is Terpene synthase 5 (TPS5) from Ricinus communis (Castor bean).